Reading from the N-terminus, the 119-residue chain is Large ribosomal subunit protein uL18 (119 aa).

It belongs to the universal ribosomal protein uL18 family. Part of the 50S ribosomal subunit; part of the 5S rRNA/L5/L18/L25 subcomplex. Contacts the 5S and 23S rRNAs.

Its function is as follows. This is one of the proteins that bind and probably mediate the attachment of the 5S RNA into the large ribosomal subunit, where it forms part of the central protuberance. The polypeptide is Large ribosomal subunit protein uL18 (Dinoroseobacter shibae (strain DSM 16493 / NCIMB 14021 / DFL 12)).